A 452-amino-acid polypeptide reads, in one-letter code: Glutathione gamma-glutamylcysteinyltransferase 2 (452 aa).

In terms of domain architecture, Peptidase C83 spans 1-220 (MSMASLYRRS…GFMLISRPHR (220 aa)). A coiled-coil region spans residues 287–315 (EDVNQNLSSEEKSRLKLKQELLKQVQETK).

The protein belongs to the phytochelatin synthase family. Expressed in shoots, roots, leaves, stems and flowers.

It catalyses the reaction [Glu(-Cys)](n)-Gly + glutathione + H(+) = [Glu(-Cys)](n+1)-Gly + glycine. Its activity is regulated as follows. Requires cadmium for activity. Also activated in heterologous system by AsO(4)(3-) ions, but not by Cu(2+), Zn(2+), Mn(2+) or Ni(2+) ions. Its function is as follows. Involved in the synthesis of phytochelatins (PC) and homophytochelatins (hPC), the heavy-metal-binding peptides of plants. This chain is Glutathione gamma-glutamylcysteinyltransferase 2 (PCS2), found in Arabidopsis thaliana (Mouse-ear cress).